The following is a 288-amino-acid chain: Syntaxin-1A (288 aa).

The span at 1–13 (MKDRTQELRTAKD) shows a compositional bias: basic and acidic residues. Residues 1–20 (MKDRTQELRTAKDSDDDDDV) are disordered. Residues 1–265 (MKDRTQELRT…KYQSKARRKK (265 aa)) lie on the Cytoplasmic side of the membrane. Phosphoserine occurs at positions 14, 64, and 95. A coiled-coil region spans residues 68–109 (DEKTKEELEELMSDIKKTANKVRSKLKSIEQSIEQEEGLNRS). Position 188 is a phosphoserine; by DAPK1 (Ser188). Residues 192–254 (LSEIETRHSE…ERAVSDTKKA (63 aa)) enclose the t-SNARE coiled-coil homology domain. Residues Lys252, Lys253, and Lys256 each participate in a glycyl lysine isopeptide (Lys-Gly) (interchain with G-Cter in SUMO) cross-link. A helical; Anchor for type IV membrane protein transmembrane segment spans residues 266–288 (IMIIICCVILGIIIASTIGGIFG).

It belongs to the syntaxin family. As to quaternary structure, part of the SNARE core complex containing SNAP25, VAMP2 and STX1A; this complex constitutes the basic catalytic machinery of the complex neurotransmitter release apparatus. The SNARE complex interacts with CPLX1. Interacts with STXBP1. The interaction with STXBP1 promotes assembly of the SNARE complex. Interacts (via C-terminus) with KCNB1 (via C-terminus); the interaction increases in a calcium-dependent manner and induces a pore-independent enhancement of exocytosis in neuroendocrine cells, chromaffin cells, pancreatic beta cells and from the soma of dorsal root ganglia (DRG) neurons. Interacts with SYTL4. Interacts with STXBP6. Interacts with PLCL1 (via C2 domain). Interacts with OTOF. Interacts with LGI3. Interacts (via the H3 domain) with SLC6A4 (via the N-terminus); this interaction regulates SLC4A6 channel conductance in thalamocortical neurons. Interacts with SYT6 and SYT8; the interaction is Ca(2+)-dependent. Interacts with VAMP8. Interacts with SNAP23. Interacts with VAPA and SYBU. Interacts with PRRT2. Interacts with SEPT8. Interacts with STXBP5L. Interacts with synaptotagmin-1/SYT1. Interacts with SEPTIN5; in the cerebellar cortex. Interacts with SEPTIN4; in the striatum. Post-translationally, phosphorylated by CK2. Phosphorylation at Ser-188 by DAPK1 significantly decreases its interaction with STXBP1. (Microbial infection) Targeted and hydrolyzed by C.botulinum neurotoxin type C (BoNT/C), which hydrolyzes the 253-Lys-|-Ala-254 bond. Cleavage inhibits neurotransmitter release. In terms of processing, phosphorylated by CK2. Phosphorylation at Ser-188 by DAPK1 significantly decreases its interaction with STXBP1. Post-translationally, sumoylated, sumoylation is required for regulation of synaptic vesicle endocytosis. In terms of tissue distribution, expressed predominantly in cerebral cortex, hippocampus, cerebellum, adrenal medulla and retina with weak expression detected in non-neuronal tissues.

It localises to the cytoplasmic vesicle. The protein resides in the secretory vesicle. It is found in the synaptic vesicle membrane. The protein localises to the cell membrane. Its subcellular location is the synapse. It localises to the synaptosome. Its function is as follows. Plays an essential role in hormone and neurotransmitter calcium-dependent exocytosis and endocytosis. Part of the SNARE (Soluble NSF Attachment Receptor) complex composed of SNAP25, STX1A and VAMP2 which mediates the fusion of synaptic vesicles with the presynaptic plasma membrane. STX1A and SNAP25 are localized on the plasma membrane while VAMP2 resides in synaptic vesicles. The pairing of the three SNAREs from the N-terminal SNARE motifs to the C-terminal anchors leads to the formation of the SNARE complex, which brings membranes into close proximity and results in final fusion. Participates in the calcium-dependent regulation of acrosomal exocytosis in sperm. Also plays an important role in the exocytosis of hormones such as insulin or glucagon-like peptide 1 (GLP-1). This is Syntaxin-1A (Stx1a) from Rattus norvegicus (Rat).